We begin with the raw amino-acid sequence, 608 residues long: Pentatricopeptide repeat-containing protein 1, apicoplast (608 aa).

PPR repeat units follow at residues 165–199 (TTLAFNAAMSAVEKKGCLSTMLDLIGTMKSKNIKP), 200–230 (DLVSYKLVLSLCDKYHLVDTAEILFEEMIES), 236–270 (NYEIYAIMISCYAKTGNGYKAIELFEKLRNDPFVE), 336–370 (QYSEYANVIYACNISNLYEQGIKYFEELLKSGKYM), 372–402 (SIFVFENIFDLLSKNGDYEKSLEYYNNLKND), 410–445 (NVNILNNLLKALSIHNKINVAEDIWNNEFDELLLTP), and 446–480 (NNLSYQILLKIYSHIDNYEKAFKLFKEMQVNKLLN).

The protein belongs to the PPR family. P subfamily. Homodimer.

It is found in the plastid. Its subcellular location is the apicoplast. Functionally, binds to apicoplast RNA transcripts, preferentially to the motif UUAU, and protects RNA transcripts from degradation by ribonuclease. The protein is Pentatricopeptide repeat-containing protein 1, apicoplast of Plasmodium falciparum (isolate 3D7).